The chain runs to 2287 residues: Protein Ycf2 (2287 aa).

Residue 1632–1639 participates in ATP binding; it reads GSIGTGRS.

The protein belongs to the Ycf2 family.

The protein localises to the plastid. It is found in the chloroplast stroma. Its function is as follows. Probable ATPase of unknown function. Its presence in a non-photosynthetic plant (Epifagus virginiana) and experiments in tobacco indicate that it has an essential function which is probably not related to photosynthesis. The polypeptide is Protein Ycf2 (Calycanthus floridus var. glaucus (Eastern sweetshrub)).